The chain runs to 468 residues: Homocitrate synthase (468 aa).

A Pyruvate carboxyltransferase domain is found at 11-266 (VGILDSTLRE…IEVVDLKKLS (256 aa)). Residue arginine 19 coordinates 2-oxoglutarate. Glutamate 20 contributes to the Mg(2+) binding site. Residues histidine 83, arginine 143, and threonine 177 each coordinate 2-oxoglutarate. Residues histidine 205 and histidine 207 each coordinate Mg(2+). Histidine 299 serves as the catalytic Proton acceptor.

Belongs to the alpha-IPM synthase/homocitrate synthase family. Homocitrate synthase LYS20/LYS21 subfamily. Mg(2+) serves as cofactor. Mn(2+) is required as a cofactor.

It catalyses the reaction acetyl-CoA + 2-oxoglutarate + H2O = (2R)-homocitrate + CoA + H(+). The protein operates within amino-acid biosynthesis; L-lysine biosynthesis via AAA pathway; L-alpha-aminoadipate from 2-oxoglutarate: step 1/5. With respect to regulation, inhibited by lysine. Its function is as follows. Catalyzes the aldol-type condensation of 2-oxoglutarate with acetyl-CoA to yield homocitrate. Carries out the first step of the alpha-aminoadipate (AAA) lysine biosynthesis pathway. Does not display 2-isopropylmalate synthase and citramalate synthase activities since it cannot use 2-oxoisovalerate or pyruvate as substrate. This Sulfolobus acidocaldarius (strain ATCC 33909 / DSM 639 / JCM 8929 / NBRC 15157 / NCIMB 11770) protein is Homocitrate synthase.